The sequence spans 122 residues: Putative iron-sulfur cluster insertion protein ErpA (122 aa).

Iron-sulfur cluster contacts are provided by Cys50, Cys114, and Cys116.

The protein belongs to the HesB/IscA family. In terms of assembly, homodimer. Iron-sulfur cluster is required as a cofactor.

Its function is as follows. Required for insertion of 4Fe-4S clusters. This Cupriavidus metallidurans (strain ATCC 43123 / DSM 2839 / NBRC 102507 / CH34) (Ralstonia metallidurans) protein is Putative iron-sulfur cluster insertion protein ErpA.